Consider the following 448-residue polypeptide: Trigger factor (448 aa).

The 86-residue stretch at 172–257 (GDRVTVDFVG…MKKIEWPHLP (86 aa)) folds into the PPIase FKBP-type domain.

The protein belongs to the FKBP-type PPIase family. Tig subfamily.

Its subcellular location is the cytoplasm. It catalyses the reaction [protein]-peptidylproline (omega=180) = [protein]-peptidylproline (omega=0). Its function is as follows. Involved in protein export. Acts as a chaperone by maintaining the newly synthesized protein in an open conformation. Functions as a peptidyl-prolyl cis-trans isomerase. The chain is Trigger factor from Burkholderia orbicola (strain MC0-3).